A 113-amino-acid polypeptide reads, in one-letter code: Teretoxin Tan14.1 (113 aa).

The first 21 residues, 1–21, serve as a signal peptide directing secretion; sequence MALEAQMTLRMFVLVAMASTV. Positions 22–86 are excised as a propeptide; that stretch reads HVLSSSFSED…DETSSRTGKR (65 aa).

Belongs to the teretoxin N (TN) superfamily. Contains 2 disulfide bonds. In terms of tissue distribution, expressed by the venom duct.

Its subcellular location is the secreted. This chain is Teretoxin Tan14.1, found in Terebra anilis (Auger snail).